The sequence spans 105 residues: Probable tetrachloroethene reductive dehalogenase membrane anchor protein (105 aa).

Transmembrane regions (helical) follow at residues 3–23, 35–55, and 66–86; these read IYDV…QYGI, IPLQ…LAWG, and AIGM…IITY.

Belongs to the PceB family.

The protein localises to the cell membrane. Its function is as follows. May act as a membrane anchor for the tetrachloroethene reductive dehalogenase PceA. The chain is Probable tetrachloroethene reductive dehalogenase membrane anchor protein from Desulfitobacterium hafniense (Desulfitobacterium frappieri).